A 254-amino-acid chain; its full sequence is Pyridoxine 5'-phosphate synthase (254 aa).

Residue Asn-12 coordinates 3-amino-2-oxopropyl phosphate. 14–15 (DH) provides a ligand contact to 1-deoxy-D-xylulose 5-phosphate. Arg-23 is a 3-amino-2-oxopropyl phosphate binding site. The active-site Proton acceptor is His-48. The 1-deoxy-D-xylulose 5-phosphate site is built by Arg-50 and His-55. Glu-75 functions as the Proton acceptor in the catalytic mechanism. A 1-deoxy-D-xylulose 5-phosphate-binding site is contributed by Thr-105. His-199 functions as the Proton donor in the catalytic mechanism. Residues Gly-200 and 221-222 (GF) each bind 3-amino-2-oxopropyl phosphate.

This sequence belongs to the PNP synthase family. In terms of assembly, homooctamer; tetramer of dimers.

Its subcellular location is the cytoplasm. The catalysed reaction is 3-amino-2-oxopropyl phosphate + 1-deoxy-D-xylulose 5-phosphate = pyridoxine 5'-phosphate + phosphate + 2 H2O + H(+). The protein operates within cofactor biosynthesis; pyridoxine 5'-phosphate biosynthesis; pyridoxine 5'-phosphate from D-erythrose 4-phosphate: step 5/5. Its function is as follows. Catalyzes the complicated ring closure reaction between the two acyclic compounds 1-deoxy-D-xylulose-5-phosphate (DXP) and 3-amino-2-oxopropyl phosphate (1-amino-acetone-3-phosphate or AAP) to form pyridoxine 5'-phosphate (PNP) and inorganic phosphate. This is Pyridoxine 5'-phosphate synthase from Rhodopseudomonas palustris (strain HaA2).